The sequence spans 525 residues: Probable pectinesterase/pectinesterase inhibitor 44 (525 aa).

The signal sequence occupies residues 1-19; it reads MSCLKYFLILLMLGLCVSS. Residues 30 to 153 form a pectinesterase inhibitor 44 region; the sequence is VPASEFVSSI…YSMLRELLPL (124 aa). An N-linked (GlcNAc...) asparagine glycan is attached at Asn98. Positions 157 to 192 are disordered; it reads EQKPKAVSKPGPIAKGPKAPPGRKLRDTDEDESLQF. The segment at 212 to 509 is pectinesterase 44; it reads DVSVALDGTG…FTVSQFIKGN (298 aa). Asn222 and Asn278 each carry an N-linked (GlcNAc...) asparagine glycan. Substrate is bound by residues Thr287 and Gln317. Catalysis depends on Asp340, which acts as the Proton donor; for pectinesterase activity. Cys354 and Cys374 are joined by a disulfide. The Nucleophile; for pectinesterase activity role is filled by Asp361. N-linked (GlcNAc...) asparagine glycosylation is found at Asn409 and Asn421. Substrate contacts are provided by Arg429 and Trp431. N-linked (GlcNAc...) asparagine glycans are attached at residues Asn443, Asn492, and Asn499.

It in the N-terminal section; belongs to the PMEI family. The protein in the C-terminal section; belongs to the pectinesterase family. Expressed in siliques.

Its subcellular location is the secreted. The protein resides in the cell wall. The enzyme catalyses [(1-&gt;4)-alpha-D-galacturonosyl methyl ester](n) + n H2O = [(1-&gt;4)-alpha-D-galacturonosyl](n) + n methanol + n H(+). It functions in the pathway glycan metabolism; pectin degradation; 2-dehydro-3-deoxy-D-gluconate from pectin: step 1/5. Its function is as follows. Acts in the modification of cell walls via demethylesterification of cell wall pectin. The protein is Probable pectinesterase/pectinesterase inhibitor 44 (PME44) of Arabidopsis thaliana (Mouse-ear cress).